Reading from the N-terminus, the 146-residue chain is Putative pre-16S rRNA nuclease (146 aa).

It belongs to the YqgF nuclease family.

It localises to the cytoplasm. Functionally, could be a nuclease involved in processing of the 5'-end of pre-16S rRNA. This is Putative pre-16S rRNA nuclease from Pseudomonas savastanoi pv. phaseolicola (strain 1448A / Race 6) (Pseudomonas syringae pv. phaseolicola (strain 1448A / Race 6)).